The chain runs to 488 residues: L-arabinose isomerase 2 (488 aa).

Mn(2+) contacts are provided by E306, E331, H348, and H447.

Belongs to the arabinose isomerase family. Mn(2+) serves as cofactor.

It catalyses the reaction beta-L-arabinopyranose = L-ribulose. The protein operates within carbohydrate degradation; L-arabinose degradation via L-ribulose; D-xylulose 5-phosphate from L-arabinose (bacterial route): step 1/3. Functionally, catalyzes the conversion of L-arabinose to L-ribulose. This is L-arabinose isomerase 2 from Clostridium acetobutylicum (strain ATCC 824 / DSM 792 / JCM 1419 / IAM 19013 / LMG 5710 / NBRC 13948 / NRRL B-527 / VKM B-1787 / 2291 / W).